A 247-amino-acid polypeptide reads, in one-letter code: PF03932 family protein CutC (247 aa).

It belongs to the CutC family.

It localises to the cytoplasm. The sequence is that of PF03932 family protein CutC from Vibrio parahaemolyticus serotype O3:K6 (strain RIMD 2210633).